We begin with the raw amino-acid sequence, 155 residues long: Transcription antitermination protein NusB (155 aa).

It belongs to the NusB family.

Functionally, involved in transcription antitermination. Required for transcription of ribosomal RNA (rRNA) genes. Binds specifically to the boxA antiterminator sequence of the ribosomal RNA (rrn) operons. The protein is Transcription antitermination protein NusB of Aliivibrio fischeri (strain ATCC 700601 / ES114) (Vibrio fischeri).